The following is a 342-amino-acid chain: Anthranilate phosphoribosyltransferase (342 aa).

5-phospho-alpha-D-ribose 1-diphosphate contacts are provided by residues Gly83, 86–87 (GD), Thr91, 93–96 (NIST), 111–119 (KHGGRSVSS), and Ala123. Gly83 is a binding site for anthranilate. Residue Ser95 coordinates Mg(2+). Arg169 serves as a coordination point for anthranilate. Mg(2+)-binding residues include Asp228 and Glu229.

This sequence belongs to the anthranilate phosphoribosyltransferase family. As to quaternary structure, homodimer. Mg(2+) serves as cofactor.

The catalysed reaction is N-(5-phospho-beta-D-ribosyl)anthranilate + diphosphate = 5-phospho-alpha-D-ribose 1-diphosphate + anthranilate. It functions in the pathway amino-acid biosynthesis; L-tryptophan biosynthesis; L-tryptophan from chorismate: step 2/5. In terms of biological role, catalyzes the transfer of the phosphoribosyl group of 5-phosphorylribose-1-pyrophosphate (PRPP) to anthranilate to yield N-(5'-phosphoribosyl)-anthranilate (PRA). The sequence is that of Anthranilate phosphoribosyltransferase from Neisseria gonorrhoeae (strain ATCC 700825 / FA 1090).